A 407-amino-acid chain; its full sequence is Na(+)-translocating NADH-quinone reductase subunit F (407 aa).

Residues 3–23 (IILGVVMFTLIVLALVLVILF) form a helical membrane-spanning segment. The region spanning 32–126 (GDITISINGD…DMDIELPEEI (95 aa)) is the 2Fe-2S ferredoxin-type domain. [2Fe-2S] cluster-binding residues include cysteine 69, cysteine 75, cysteine 78, and cysteine 110. The 141-residue stretch at 129–269 (VKKWECTVIS…SGPFGEFFAK (141 aa)) folds into the FAD-binding FR-type domain. Residues 272 to 389 (DAEMVFIGGG…PMMNAAVIGM (118 aa)) form a catalytic region.

Belongs to the NqrF family. Composed of six subunits; NqrA, NqrB, NqrC, NqrD, NqrE and NqrF. It depends on [2Fe-2S] cluster as a cofactor. Requires FAD as cofactor.

The protein localises to the cell inner membrane. The catalysed reaction is a ubiquinone + n Na(+)(in) + NADH + H(+) = a ubiquinol + n Na(+)(out) + NAD(+). In terms of biological role, NQR complex catalyzes the reduction of ubiquinone-1 to ubiquinol by two successive reactions, coupled with the transport of Na(+) ions from the cytoplasm to the periplasm. The first step is catalyzed by NqrF, which accepts electrons from NADH and reduces ubiquinone-1 to ubisemiquinone by a one-electron transfer pathway. The polypeptide is Na(+)-translocating NADH-quinone reductase subunit F (Vibrio anguillarum (Listonella anguillarum)).